The sequence spans 646 residues: Leukotriene A-4 hydrolase homolog (646 aa).

Residues Gln-172 to Gln-174 and Pro-307 to Glu-312 contribute to the a peptide site. His-336 contacts Zn(2+). The Proton acceptor role is filled by Glu-337. Residues His-340 and Glu-359 each contribute to the Zn(2+) site. Tyr-424 functions as the Proton donor in the catalytic mechanism.

The protein belongs to the peptidase M1 family. Zn(2+) serves as cofactor.

It is found in the cytoplasm. The protein localises to the nucleus. It catalyses the reaction leukotriene A4 + H2O = leukotriene B4. It participates in lipid metabolism; leukotriene B4 biosynthesis. In terms of biological role, aminopeptidase that preferentially cleaves tripeptides. Also has low epoxide hydrolase activity (in vitro). Can hydrolyze an epoxide moiety of LTA(4) to form LTB(4) (in vitro). This Botryotinia fuckeliana (strain B05.10) (Noble rot fungus) protein is Leukotriene A-4 hydrolase homolog.